A 94-amino-acid polypeptide reads, in one-letter code: Large ribosomal subunit protein bL27 (94 aa).

Positions 1-9 (MLKLNLQFF) are excised as a propeptide. A disordered region spans residues 13-32 (KGLGSTKNGRDSESKRLGAK). The span at 20–32 (NGRDSESKRLGAK) shows a compositional bias: basic and acidic residues.

The protein belongs to the bacterial ribosomal protein bL27 family. Post-translationally, the N-terminus is cleaved by ribosomal processing cysteine protease Prp.

This chain is Large ribosomal subunit protein bL27, found in Staphylococcus saprophyticus subsp. saprophyticus (strain ATCC 15305 / DSM 20229 / NCIMB 8711 / NCTC 7292 / S-41).